Reading from the N-terminus, the 493-residue chain is Uridine 5'-monophosphate synthase (493 aa).

The tract at residues 1–207 (MVAQNSDKMR…VAKYIAAVQI (207 aa)) is OPRTase. Positions 208 to 233 (NSDGTFVGGDKGDVVRANDLQRTKLT) are domain linker. The interval 234-493 (YENRANLAKS…WAAYQDRVAK (260 aa)) is OMPdecase. Lys320 is an active-site residue.

This sequence in the N-terminal section; belongs to the purine/pyrimidine phosphoribosyltransferase family. It in the C-terminal section; belongs to the OMP decarboxylase family.

It carries out the reaction orotidine 5'-phosphate + diphosphate = orotate + 5-phospho-alpha-D-ribose 1-diphosphate. The enzyme catalyses orotidine 5'-phosphate + H(+) = UMP + CO2. The protein operates within pyrimidine metabolism; UMP biosynthesis via de novo pathway; UMP from orotate: step 1/2. It participates in pyrimidine metabolism; UMP biosynthesis via de novo pathway; UMP from orotate: step 2/2. This is Uridine 5'-monophosphate synthase (r-l) from Drosophila melanogaster (Fruit fly).